The sequence spans 176 residues: 3-hydroxydecanoyl-[acyl-carrier-protein] dehydratase (176 aa).

H71 is a catalytic residue.

It belongs to the thioester dehydratase family. FabA subfamily. In terms of assembly, homodimer.

It localises to the cytoplasm. It catalyses the reaction a (3R)-hydroxyacyl-[ACP] = a (2E)-enoyl-[ACP] + H2O. It carries out the reaction (3R)-hydroxydecanoyl-[ACP] = (2E)-decenoyl-[ACP] + H2O. The catalysed reaction is (2E)-decenoyl-[ACP] = (3Z)-decenoyl-[ACP]. It functions in the pathway lipid metabolism; fatty acid biosynthesis. Necessary for the introduction of cis unsaturation into fatty acids. Catalyzes the dehydration of (3R)-3-hydroxydecanoyl-ACP to E-(2)-decenoyl-ACP and then its isomerization to Z-(3)-decenoyl-ACP. Can catalyze the dehydratase reaction for beta-hydroxyacyl-ACPs with saturated chain lengths up to 16:0, being most active on intermediate chain length. This is 3-hydroxydecanoyl-[acyl-carrier-protein] dehydratase from Rhodopseudomonas palustris (strain BisA53).